The chain runs to 52 residues: Small ribosomal subunit protein uS14 (52 aa).

Residues C17, C20, C35, and C38 each coordinate Zn(2+).

The protein belongs to the universal ribosomal protein uS14 family. Zinc-binding uS14 subfamily. Part of the 30S ribosomal subunit. Zn(2+) is required as a cofactor.

In terms of biological role, binds 16S rRNA, required for the assembly of 30S particles. In Halobacterium salinarum (strain ATCC 700922 / JCM 11081 / NRC-1) (Halobacterium halobium), this protein is Small ribosomal subunit protein uS14.